The primary structure comprises 470 residues: Methylenetetrahydrofolate--tRNA-(uracil-5-)-methyltransferase TrmFO (470 aa).

10 to 15 (GAGLAG) contacts FAD.

It belongs to the MnmG family. TrmFO subfamily. The cofactor is FAD.

The protein resides in the cytoplasm. It catalyses the reaction uridine(54) in tRNA + (6R)-5,10-methylene-5,6,7,8-tetrahydrofolate + NADH + H(+) = 5-methyluridine(54) in tRNA + (6S)-5,6,7,8-tetrahydrofolate + NAD(+). The enzyme catalyses uridine(54) in tRNA + (6R)-5,10-methylene-5,6,7,8-tetrahydrofolate + NADPH + H(+) = 5-methyluridine(54) in tRNA + (6S)-5,6,7,8-tetrahydrofolate + NADP(+). Catalyzes the folate-dependent formation of 5-methyl-uridine at position 54 (M-5-U54) in all tRNAs. The protein is Methylenetetrahydrofolate--tRNA-(uracil-5-)-methyltransferase TrmFO of Prochlorococcus marinus (strain MIT 9215).